The chain runs to 91 residues: Probable insulin-like peptide gamma-type 1 (91 aa).

Positions 1–26 (MSSYRQTLFILIILIVIILFVNEGQG) are cleaved as a signal peptide. Intrachain disulfides connect Cys-37–Cys-66, Cys-49–Cys-79, and Cys-65–Cys-70.

This sequence belongs to the insulin family.

The protein resides in the secreted. In Caenorhabditis elegans, this protein is Probable insulin-like peptide gamma-type 1 (ins-11).